The sequence spans 333 residues: B3 domain-containing transcription factor NGA4 (333 aa).

A DNA-binding region (TF-B3) is located at residues 36 to 145; sequence FDKVLTPSDV…KIMFIDWRPR (110 aa). The tract at residues 268-333 is disordered; the sequence is VEESSSSGDT…YKRKGKSLEL (66 aa). Basic and acidic residues predominate over residues 323–333; sequence EYKRKGKSLEL.

The protein localises to the nucleus. Its function is as follows. Regulates lateral organ growth. Functionally redundant with NGA1, NGA2 and NGA3. The sequence is that of B3 domain-containing transcription factor NGA4 (NGA4) from Arabidopsis thaliana (Mouse-ear cress).